A 539-amino-acid polypeptide reads, in one-letter code: CTP synthase (539 aa).

Residues 1–267 are amidoligase domain; that stretch reads MTKYIFVTGG…DQKVVDFLHI (267 aa). Ser13 provides a ligand contact to CTP. Ser13 serves as a coordination point for UTP. ATP is bound at residue 14 to 19; that stretch reads SLGKGI. An L-glutamine-binding site is contributed by Tyr54. ATP is bound at residue Asp71. Asp71 and Glu141 together coordinate Mg(2+). Residues 148-150, 188-193, and Lys224 each bind CTP; these read DME and KSKPTQ. Residues 188-193 and Lys224 each bind UTP; that span reads KSKPTQ. One can recognise a Glutamine amidotransferase type-1 domain in the interval 294-537; that stretch reads KITLVGKYVE…IGAASGLQVD (244 aa). Gly356 contributes to the L-glutamine binding site. The Nucleophile; for glutamine hydrolysis role is filled by Cys383. Residues 384-387, Glu407, and Arg465 each bind L-glutamine; that span reads LGMQ. Active-site residues include His510 and Glu512.

This sequence belongs to the CTP synthase family. As to quaternary structure, homotetramer.

It carries out the reaction UTP + L-glutamine + ATP + H2O = CTP + L-glutamate + ADP + phosphate + 2 H(+). It catalyses the reaction L-glutamine + H2O = L-glutamate + NH4(+). The enzyme catalyses UTP + NH4(+) + ATP = CTP + ADP + phosphate + 2 H(+). It functions in the pathway pyrimidine metabolism; CTP biosynthesis via de novo pathway; CTP from UDP: step 2/2. Its activity is regulated as follows. Allosterically activated by GTP, when glutamine is the substrate; GTP has no effect on the reaction when ammonia is the substrate. The allosteric effector GTP functions by stabilizing the protein conformation that binds the tetrahedral intermediate(s) formed during glutamine hydrolysis. Inhibited by the product CTP, via allosteric rather than competitive inhibition. In terms of biological role, catalyzes the ATP-dependent amination of UTP to CTP with either L-glutamine or ammonia as the source of nitrogen. Regulates intracellular CTP levels through interactions with the four ribonucleotide triphosphates. This is CTP synthase from Lactobacillus delbrueckii subsp. bulgaricus (strain ATCC 11842 / DSM 20081 / BCRC 10696 / JCM 1002 / NBRC 13953 / NCIMB 11778 / NCTC 12712 / WDCM 00102 / Lb 14).